The following is a 453-amino-acid chain: Autophagy-related protein 21 (453 aa).

One copy of the WD 1 repeat lies at leucine 4–serine 137. Positions glycine 177–asparagine 207 are disordered. Over residues serine 187 to asparagine 198 the composition is skewed to low complexity. 2 WD repeats span residues asparagine 252–aspartate 347 and phenylalanine 419–isoleucine 453. The short motif at phenylalanine 310–serine 314 is the L/FRRG motif element.

This sequence belongs to the WD repeat PROPPIN family.

The protein localises to the cytoplasm. It localises to the membrane. The protein resides in the vacuole membrane. Functionally, required for cytoplasm to vacuole transport (Cvt) vesicles formation and mitophagy. Involved in binding of phosphatidylethanolamine to ATG8 and in recruitment of ATG8 and ATG5 to the pre-autophagosomal structure. Protects ATG8 from ARG4-mediated cleavage. The protein is Autophagy-related protein 21 (ATG21) of Candida glabrata (strain ATCC 2001 / BCRC 20586 / JCM 3761 / NBRC 0622 / NRRL Y-65 / CBS 138) (Yeast).